The primary structure comprises 298 residues: Small ribosomal subunit protein uS2 (298 aa).

The protein belongs to the universal ribosomal protein uS2 family.

The protein is Small ribosomal subunit protein uS2 of Leifsonia xyli subsp. xyli (strain CTCB07).